We begin with the raw amino-acid sequence, 94 residues long: Large ribosomal subunit protein bL25 (94 aa).

Belongs to the bacterial ribosomal protein bL25 family. As to quaternary structure, part of the 50S ribosomal subunit; part of the 5S rRNA/L5/L18/L25 subcomplex. Contacts the 5S rRNA. Binds to the 5S rRNA independently of L5 and L18.

Its function is as follows. This is one of the proteins that binds to the 5S RNA in the ribosome where it forms part of the central protuberance. The protein is Large ribosomal subunit protein bL25 of Salmonella gallinarum (strain 287/91 / NCTC 13346).